A 102-amino-acid polypeptide reads, in one-letter code: NADH-quinone oxidoreductase subunit K (102 aa).

Transmembrane regions (helical) follow at residues 5-25, 31-51, and 66-86; these read IAHY…GIFL, IIIL…FIAF, and FVLT…VVFF.

The protein belongs to the complex I subunit 4L family. In terms of assembly, NDH-1 is composed of 14 different subunits. Subunits NuoA, H, J, K, L, M, N constitute the membrane sector of the complex.

The protein resides in the cell inner membrane. The enzyme catalyses a quinone + NADH + 5 H(+)(in) = a quinol + NAD(+) + 4 H(+)(out). Its function is as follows. NDH-1 shuttles electrons from NADH, via FMN and iron-sulfur (Fe-S) centers, to quinones in the respiratory chain. The immediate electron acceptor for the enzyme in this species is believed to be ubiquinone. Couples the redox reaction to proton translocation (for every two electrons transferred, four hydrogen ions are translocated across the cytoplasmic membrane), and thus conserves the redox energy in a proton gradient. The chain is NADH-quinone oxidoreductase subunit K from Chelativorans sp. (strain BNC1).